We begin with the raw amino-acid sequence, 319 residues long: Coproporphyrin III ferrochelatase 2 (319 aa).

Fe-coproporphyrin III is bound by residues Tyr13, Arg30, 46 to 47, Ser54, and Tyr125; that span reads RY. Fe(2+)-binding residues include His181 and Glu262.

The protein belongs to the ferrochelatase family.

It localises to the cytoplasm. The catalysed reaction is Fe-coproporphyrin III + 2 H(+) = coproporphyrin III + Fe(2+). Its pathway is porphyrin-containing compound metabolism; protoheme biosynthesis. In terms of biological role, involved in coproporphyrin-dependent heme b biosynthesis. Catalyzes the insertion of ferrous iron into coproporphyrin III to form Fe-coproporphyrin III. This Bacillus cereus (strain ATCC 14579 / DSM 31 / CCUG 7414 / JCM 2152 / NBRC 15305 / NCIMB 9373 / NCTC 2599 / NRRL B-3711) protein is Coproporphyrin III ferrochelatase 2.